The sequence spans 126 residues: Aspartate 1-decarboxylase (126 aa).

Catalysis depends on Ser-25, which acts as the Schiff-base intermediate with substrate; via pyruvic acid. At Ser-25 the chain carries Pyruvic acid (Ser). Substrate is bound at residue Thr-57. The active-site Proton donor is Tyr-58. 73–75 contributes to the substrate binding site; it reads GAA.

This sequence belongs to the PanD family. As to quaternary structure, heterooctamer of four alpha and four beta subunits. Requires pyruvate as cofactor. Is synthesized initially as an inactive proenzyme, which is activated by self-cleavage at a specific serine bond to produce a beta-subunit with a hydroxyl group at its C-terminus and an alpha-subunit with a pyruvoyl group at its N-terminus.

The protein localises to the cytoplasm. It catalyses the reaction L-aspartate + H(+) = beta-alanine + CO2. Its pathway is cofactor biosynthesis; (R)-pantothenate biosynthesis; beta-alanine from L-aspartate: step 1/1. In terms of biological role, catalyzes the pyruvoyl-dependent decarboxylation of aspartate to produce beta-alanine. This is Aspartate 1-decarboxylase from Thioalkalivibrio sulfidiphilus (strain HL-EbGR7).